Here is a 447-residue protein sequence, read N- to C-terminus: MDETSPLVSPLRDSNDFNYGPAEPTSPRGGFGSTPGSVVRLPAGSPGRSRERQPLLDRDRGASPRDPHRNEFPEDPEFREIIRKAERAIEEGIYPERIYQGSSGSYFVKDSAGKIIGVFKPKNEEPYGQLNPKWTKWLQKLCCPCCFGRDCLVLNQGYLSEAGASLVDQKLELNIVPRTKVVYLASETFNYSAIDRVKSRGKRLALEKVPKVGQRFHRIGLPPKVGSFQIFVEGYKDADFWLRRFEAEPLPENTNRQLQLQFERLVVLDYIIRNTDRGNDNWLIKYDYPMDTSSNRDSDWVLVKDPIIKLAAIDNGLAFPLKHPDSWRAYPFYWAWLPQAKVVFSQEIRDLVLPKLADPNFIKDLEEDLYELFKKDPGFDRGQFKKQVSVMRGQILNLSQAMRDGKTPLQLVQMPPVIVETARVPQRANSESYTQSFQSRRPFFTWW.

Residues 1 to 77 are disordered; that stretch reads MDETSPLVSP…HRNEFPEDPE (77 aa). Positions 48 to 77 are enriched in basic and acidic residues; it reads RSRERQPLLDRDRGASPRDPHRNEFPEDPE. The PI3K/PI4K catalytic domain occupies 92 to 421; the sequence is GIYPERIYQG…VQMPPVIVET (330 aa). The interval 98 to 104 is G-loop; that stretch reads IYQGSSG. ATP contacts are provided by residues 99 to 105 and Lys-120; that span reads YQGSSGS. The interval 125-127 is important for substrate binding; that stretch reads EPY. The segment at 133–146 is important for interaction with membranes; it reads KWTKWLQKLCCPCC. S-palmitoyl cysteine attachment occurs at residues Cys-142, Cys-143, Cys-145, and Cys-146. An ATP-binding site is contributed by 229-232; the sequence is QIFV. The important for interaction with membranes stretch occupies residues 236–244; that stretch reads KDADFWLRR. Residues 273 to 281 are catalytic loop; the sequence is RNTDRGNDN. The activation loop stretch occupies residues 312–332; sequence AIDNGLAFPLKHPDSWRAYPF. Asp-314 is an ATP binding site. Residues 327-336 form an important for interaction with membranes region; the sequence is WRAYPFYWAW.

It belongs to the PI3/PI4-kinase family. Type II PI4K subfamily.

The protein localises to the golgi apparatus. It localises to the trans-Golgi network membrane. Its subcellular location is the membrane raft. The protein resides in the endosome. It is found in the cytoplasmic vesicle. The protein localises to the cell projection. It localises to the dendrite. Its subcellular location is the presynaptic cell membrane. The protein resides in the synapse. It is found in the synaptosome. The protein localises to the mitochondrion. It localises to the membrane. Its subcellular location is the cell membrane. The protein resides in the perikaryon. It is found in the neuron projection. It carries out the reaction a 1,2-diacyl-sn-glycero-3-phospho-(1D-myo-inositol) + ATP = a 1,2-diacyl-sn-glycero-3-phospho-(1D-myo-inositol 4-phosphate) + ADP + H(+). Membrane-bound phosphatidylinositol-4 kinase (PI4-kinase) that catalyzes the phosphorylation of phosphatidylinositol (PI) to phosphatidylinositol 4-phosphate (PI4P), a lipid that plays important roles in endocytosis, Golgi function, protein sorting and membrane trafficking. Besides, phosphorylation of phosphatidylinositol (PI) to phosphatidylinositol 4-phosphate (PI4P) is the first committed step in the generation of phosphatidylinositol 4,5-bisphosphate (PIP2), a precursor of the second messenger inositol 1,4,5-trisphosphate (InsP3). This Danio rerio (Zebrafish) protein is Phosphatidylinositol 4-kinase type 2-alpha (pi4k2a).